Reading from the N-terminus, the 608-residue chain is ABC transporter ATP-binding protein RamB (608 aa).

Transmembrane regions (helical) follow at residues 25–45 (GVLV…FLVG), 66–86 (LWLG…RGVF), 141–161 (GLVL…LGLL), 166–186 (ALLV…LVTL), and 253–273 (AALG…VEWL). The ABC transmembrane type-1 domain occupies 30-296 (LALWSLAESG…FTYLVQSLLP (267 aa)). The segment at 321 to 362 (GPEPEPEPEPEPEPEPELGSGLEPEPEPASEPESGPSTASAS) is disordered. Residues 324–336 (PEPEPEPEPEPEP) show a composition bias toward acidic residues. Residues 351–362 (EPESGPSTASAS) are compositionally biased toward low complexity. One can recognise an ABC transporter domain in the interval 376–605 (VELRSVTLSY…SPLYRDLTGH (230 aa)). 410 to 417 (GPSGIGKS) is an ATP binding site.

It belongs to the ABC transporter superfamily.

It is found in the cell membrane. Functionally, probably involved in exporting SapB from the cell. Expression of the ram locus (ramA, ramB and ramR) induces rapid aerial mycelium formation in S.lividans. This is ABC transporter ATP-binding protein RamB from Streptomyces coelicolor (strain ATCC BAA-471 / A3(2) / M145).